The primary structure comprises 46 residues: Viscotoxin-A2 (46 aa).

Cystine bridges form between Cys3-Cys40, Cys4-Cys32, and Cys16-Cys26.

The protein belongs to the plant thionin (TC 1.C.44) family.

Its subcellular location is the secreted. Functionally, thionins are small plant proteins which are toxic to animal cells. They seem to exert their toxic effect at the level of the cell membrane. Their precise function is not known. The sequence is that of Viscotoxin-A2 (THI2.3) from Viscum album (European mistletoe).